We begin with the raw amino-acid sequence, 142 residues long: Relaxin-3 (142 aa).

Positions 1–25 are cleaved as a signal peptide; sequence MARYKLLLLLAVWVLTGELWPGAEA. 3 disulfide bridges follow: Cys35–Cys129, Cys47–Cys142, and Cys128–Cys133. A propeptide spans 55–118 (connecting peptide); sequence SDILAHEAMG…GTPGALRGSR (64 aa).

It belongs to the insulin family. Heterodimer of a B chain and an A chain linked by two disulfide bonds.

The protein resides in the secreted. Its function is as follows. May play a role in neuropeptide signaling processes. Ligand for LGR7, RXFP3 and RXFP4. In Pan troglodytes (Chimpanzee), this protein is Relaxin-3 (RLN3).